A 175-amino-acid polypeptide reads, in one-letter code: Thioredoxin M-type, chloroplastic (175 aa).

The transit peptide at 1 to 62 (MALETCLRGW…ARRPSRFVCK (62 aa)) directs the protein to the chloroplast. In terms of domain architecture, Thioredoxin spans 63-174 (CKNVVDEVIV…LCTIIDKYIG (112 aa)). Cys-98 and Cys-101 are oxidised to a cystine.

It belongs to the thioredoxin family. Plant M-type subfamily. Forms a complex with heterodimeric ferredoxin-thioredoxin reductase (FTR) and ferredoxin.

It localises to the plastid. It is found in the chloroplast. Its function is as follows. Participates in various redox reactions through the reversible oxidation of the active center dithiol to a disulfide. The M form is known to activate NADP-malate dehydrogenase. This chain is Thioredoxin M-type, chloroplastic, found in Triticum aestivum (Wheat).